Here is a 277-residue protein sequence, read N- to C-terminus: Ribosomal RNA small subunit methyltransferase I (277 aa).

Belongs to the methyltransferase superfamily. RsmI family.

It is found in the cytoplasm. It catalyses the reaction cytidine(1402) in 16S rRNA + S-adenosyl-L-methionine = 2'-O-methylcytidine(1402) in 16S rRNA + S-adenosyl-L-homocysteine + H(+). Its function is as follows. Catalyzes the 2'-O-methylation of the ribose of cytidine 1402 (C1402) in 16S rRNA. This is Ribosomal RNA small subunit methyltransferase I from Mycoplasma genitalium (strain ATCC 33530 / DSM 19775 / NCTC 10195 / G37) (Mycoplasmoides genitalium).